The sequence spans 362 residues: Large ribosomal subunit protein uL2m (362 aa).

The N-terminal 23 residues, 1–23, are a transit peptide targeting the mitochondrion; the sequence is MLSYNRFRGYLIPQIHALKLFRY. Residues 306–362 form a disordered region; that stretch reads AMNPCDHPHGGGGGKSIGNKPSQSPWGVLAKGGYKTRRGKNVNKLLVRDRPRGKEKR. Residues 351–362 show a composition bias toward basic and acidic residues; the sequence is LVRDRPRGKEKR.

It belongs to the universal ribosomal protein uL2 family. Component of the mitochondrial large ribosomal subunit (mt-LSU). Mature yeast 74S mitochondrial ribosomes consist of a small (37S) and a large (54S) subunit. The 37S small subunit contains a 15S ribosomal RNA (15S mt-rRNA) and at least 32 different proteins. The 54S large subunit contains a 21S rRNA (21S mt-rRNA) and at least 45 different proteins. uL2m has a Na/K ligand binding site.

It localises to the mitochondrion. In terms of biological role, component of the mitochondrial ribosome (mitoribosome), a dedicated translation machinery responsible for the synthesis of mitochondrial genome-encoded proteins, including at least some of the essential transmembrane subunits of the mitochondrial respiratory chain. The mitoribosomes are attached to the mitochondrial inner membrane and translation products are cotranslationally integrated into the membrane. The sequence is that of Large ribosomal subunit protein uL2m (rml2) from Schizosaccharomyces pombe (strain 972 / ATCC 24843) (Fission yeast).